Reading from the N-terminus, the 851-residue chain is DNA mismatch repair protein MutS (851 aa).

614-621 is a binding site for ATP; the sequence is GPNMGGKS.

It belongs to the DNA mismatch repair MutS family.

This protein is involved in the repair of mismatches in DNA. It is possible that it carries out the mismatch recognition step. This protein has a weak ATPase activity. This is DNA mismatch repair protein MutS from Yersinia pseudotuberculosis serotype O:1b (strain IP 31758).